A 457-amino-acid chain; its full sequence is tRNA-2-methylthio-N(6)-dimethylallyladenosine synthase (457 aa).

Residues 3–120 (KKVYVKTFGC…LPQMIDARRT (118 aa)) enclose the MTTase N-terminal domain. Residues Cys12, Cys49, Cys83, Cys157, Cys161, and Cys164 each coordinate [4Fe-4S] cluster. Residues 143-377 (RVEGPTAFVS…QATIEENVAR (235 aa)) enclose the Radical SAM core domain. Positions 380–447 (QSMVGKVERI…PHSLRGELVL (68 aa)) constitute a TRAM domain.

It belongs to the methylthiotransferase family. MiaB subfamily. As to quaternary structure, monomer. [4Fe-4S] cluster serves as cofactor.

The protein localises to the cytoplasm. The enzyme catalyses N(6)-dimethylallyladenosine(37) in tRNA + (sulfur carrier)-SH + AH2 + 2 S-adenosyl-L-methionine = 2-methylsulfanyl-N(6)-dimethylallyladenosine(37) in tRNA + (sulfur carrier)-H + 5'-deoxyadenosine + L-methionine + A + S-adenosyl-L-homocysteine + 2 H(+). Functionally, catalyzes the methylthiolation of N6-(dimethylallyl)adenosine (i(6)A), leading to the formation of 2-methylthio-N6-(dimethylallyl)adenosine (ms(2)i(6)A) at position 37 in tRNAs that read codons beginning with uridine. This is tRNA-2-methylthio-N(6)-dimethylallyladenosine synthase from Burkholderia multivorans (strain ATCC 17616 / 249).